The primary structure comprises 343 residues: Arginine-hydroxylase NDUFAF5, mitochondrial (343 aa).

The transit peptide at 1–29 (MLRKVVLLRLCPLLGRPAVSASSGSRREV) directs the protein to the mitochondrion.

The protein belongs to the methyltransferase superfamily. In terms of assembly, interacts with NDUFAF8, leading to stabilize NDUFAF5. Interacts with NDUFS7. Interacts with PYURF (via TRM112 domain); the interaction is direct and stabilizes NDUFAF5 protein.

The protein localises to the mitochondrion inner membrane. In terms of biological role, arginine hydroxylase that mediates hydroxylation of 'Arg-122' of NDUFS7 and is involved in the assembly of mitochondrial NADH:ubiquinone oxidoreductase complex (complex I, MT-ND1) at early stages. May also have methyltransferase activity. The protein is Arginine-hydroxylase NDUFAF5, mitochondrial of Mus musculus (Mouse).